A 471-amino-acid chain; its full sequence is Type 2 glycosyltransferase (471 aa).

Residues Ile4 to Val24 form a helical membrane-spanning segment. N-linked (GlcNAc...) asparagine glycosylation is found at Asn29, Asn88, and Asn222. 3 helical membrane-spanning segments follow: residues Cys305 to Leu325, Met339 to Gly359, and Val368 to Gly388. Asn458 is a glycosylation site (N-linked (GlcNAc...) asparagine).

It belongs to the GT2 glycosyltransferase family.

The protein localises to the cell membrane. Glycosyltransferase involved in the maintenance of the outermost surface of the fungal cell wall. Likely functions in the synthesis of a currently unknown, potentially minor but widespread, extracellular or outer cell wall polysaccharide which plays a key role in facilitating many interactions between plants and fungi by enabling hyphal growth on solid matrices. This is Type 2 glycosyltransferase from Zymoseptoria tritici (strain CBS 115943 / IPO323) (Speckled leaf blotch fungus).